A 288-amino-acid polypeptide reads, in one-letter code: Bifunctional protein FolD (288 aa).

NADP(+) contacts are provided by residues 164-166 and valine 230; that span reads GRS.

This sequence belongs to the tetrahydrofolate dehydrogenase/cyclohydrolase family. In terms of assembly, homodimer.

The enzyme catalyses (6R)-5,10-methylene-5,6,7,8-tetrahydrofolate + NADP(+) = (6R)-5,10-methenyltetrahydrofolate + NADPH. It carries out the reaction (6R)-5,10-methenyltetrahydrofolate + H2O = (6R)-10-formyltetrahydrofolate + H(+). The protein operates within one-carbon metabolism; tetrahydrofolate interconversion. Functionally, catalyzes the oxidation of 5,10-methylenetetrahydrofolate to 5,10-methenyltetrahydrofolate and then the hydrolysis of 5,10-methenyltetrahydrofolate to 10-formyltetrahydrofolate. This Thermomicrobium roseum (strain ATCC 27502 / DSM 5159 / P-2) protein is Bifunctional protein FolD.